A 76-amino-acid polypeptide reads, in one-letter code: Dolichyl-diphosphooligosaccharide--protein glycosyltransferase subunit OST5 (76 aa).

Transmembrane regions (helical) follow at residues 14 to 34 (FYPV…ATFI) and 54 to 74 (ALIA…AGGI).

This sequence belongs to the OST5 family. In terms of assembly, component of the oligosaccharyltransferase (OST) complex.

The protein resides in the membrane. Subunit of the oligosaccharyl transferase (OST) complex that catalyzes the initial transfer of a defined glycan (Glc(3)Man(9)GlcNAc(2) in eukaryotes) from the lipid carrier dolichol-pyrophosphate to an asparagine residue within an Asn-X-Ser/Thr consensus motif in nascent polypeptide chains, the first step in protein N-glycosylation. N-glycosylation occurs cotranslationally and the complex associates with the Sec61 complex at the channel-forming translocon complex that mediates protein translocation across the endoplasmic reticulum (ER). All subunits are required for a maximal enzyme activity. This Dictyostelium discoideum (Social amoeba) protein is Dolichyl-diphosphooligosaccharide--protein glycosyltransferase subunit OST5.